Here is a 288-residue protein sequence, read N- to C-terminus: Putative transcription factor kapC (288 aa).

The span at 1 to 10 (MQPTLAPAPH) shows a compositional bias: pro residues. Residues 1–121 (MQPTLAPAPH…AAQRAFRQRK (121 aa)) are disordered. Residues 26 to 41 (HDQLLAAHQHLSHPQQ) show a composition bias toward low complexity. Positions 42–54 (ARPPPPPPQPPHM) are enriched in pro residues. Over residues 84–93 (QPDLSGQESP) the composition is skewed to polar residues. The 64-residue stretch at 100-163 (PLSTSKRAAQ…EYIINLQSRL (64 aa)) folds into the bZIP domain. The segment at 101–124 (LSTSKRAAQNRAAQRAFRQRKEAH) is basic motif. A compositionally biased stretch (low complexity) spans 106–116 (RAAQNRAAQRA). Positions 128–159 (LEGKVKAYETMGEAIKALQAENYQLREYIINL) are leucine-zipper. Disordered regions lie at residues 172–226 (ELPG…NDDM) and 242–288 (PPTE…PLIS). Residues 202-212 (PVPPPTAPQQP) show a composition bias toward pro residues. The span at 213 to 222 (QPAQNQASAP) shows a compositional bias: low complexity.

Belongs to the bZIP family.

The protein localises to the nucleus. In terms of biological role, putative transcription factor. This Aspergillus clavatus (strain ATCC 1007 / CBS 513.65 / DSM 816 / NCTC 3887 / NRRL 1 / QM 1276 / 107) protein is Putative transcription factor kapC (kapC).